Here is a 90-residue protein sequence, read N- to C-terminus: UPF0386 protein Rru_A2144 (90 aa).

The protein belongs to the UPF0386 family.

The protein is UPF0386 protein Rru_A2144 of Rhodospirillum rubrum (strain ATCC 11170 / ATH 1.1.1 / DSM 467 / LMG 4362 / NCIMB 8255 / S1).